A 152-amino-acid chain; its full sequence is Ribonuclease pancreatic beta-type (152 aa).

Positions 1-25 are cleaved as a signal peptide; sequence MGLXKSFALFSLLVLVLGWVQPSLS. Positions 25 to 53 are disordered; sequence SGESRESSADKFKRQHMDPDSPSKSSPTY. Residues 27–45 are compositionally biased toward basic and acidic residues; sequence ESRESSADKFKRQHMDPDS. Lys35 and Arg38 together coordinate substrate. His40 (proton acceptor) is an active-site residue. Intrachain disulfides connect Cys54/Cys112, Cys68/Cys123, Cys86/Cys138, and Cys93/Cys100. Substrate-binding positions include 69-73 and Lys94; that span reads KRVNT. His147 acts as the Proton donor in catalysis.

It belongs to the pancreatic ribonuclease family. Monomer.

It is found in the secreted. It carries out the reaction an [RNA] containing cytidine + H2O = an [RNA]-3'-cytidine-3'-phosphate + a 5'-hydroxy-ribonucleotide-3'-[RNA].. The enzyme catalyses an [RNA] containing uridine + H2O = an [RNA]-3'-uridine-3'-phosphate + a 5'-hydroxy-ribonucleotide-3'-[RNA].. In terms of biological role, endonuclease that catalyzes the cleavage of RNA on the 3' side of pyrimidine nucleotides. Acts on single-stranded and double-stranded RNA. The polypeptide is Ribonuclease pancreatic beta-type (Rattus tiomanicus (Malayan field rat)).